The primary structure comprises 360 residues: Methylthioribose-1-phosphate isomerase (360 aa).

D246 (proton donor) is an active-site residue.

Belongs to the eIF-2B alpha/beta/delta subunits family. MtnA subfamily.

Its subcellular location is the cytoplasm. The protein localises to the nucleus. It catalyses the reaction 5-(methylsulfanyl)-alpha-D-ribose 1-phosphate = 5-(methylsulfanyl)-D-ribulose 1-phosphate. Its pathway is amino-acid biosynthesis; L-methionine biosynthesis via salvage pathway; L-methionine from S-methyl-5-thio-alpha-D-ribose 1-phosphate: step 1/6. Catalyzes the interconversion of methylthioribose-1-phosphate (MTR-1-P) into methylthioribulose-1-phosphate (MTRu-1-P). This is Methylthioribose-1-phosphate isomerase from Aedes aegypti (Yellowfever mosquito).